A 236-amino-acid chain; its full sequence is UPF0257 lipoprotein YnfC (236 aa).

The N-terminal stretch at 1–16 is a signal peptide; that stretch reads MKKPLLLTLLCMILAG. C17 carries N-palmitoyl cysteine lipidation. A lipid anchor (S-diacylglycerol cysteine) is attached at C17.

Belongs to the UPF0257 family.

The protein resides in the cell membrane. The protein is UPF0257 lipoprotein YnfC of Salmonella paratyphi C (strain RKS4594).